The primary structure comprises 498 residues: MDAKLLLPFPFAPAAATRSPKSLFLGAPLPPPPRPPPFPLRLRPRPAAVVAQAAVKRRKEAPFDTVIQRDKKLKLVLKLRNILVAQPDRVMSLRELGRFRRDLGLTRKRRLIALLRRFPGVFDVVEEGVYSLRFRLTPAAERLYLDELRLRNESEGLAVAKLRKLLMMSQEKRILIEKVAHLKHDLGLPPEFRDTVCLRYPQYFRVVRMDRGPALELTHWDPELAVSAAELAEEESRAREAEERNLIIDRPLKFNRVRLPKGLKLTRGEARRIARFKEMPYISPYADFSHLRSGSDEKEKHACGVVHEILSLTVEKRTLVDHLTHFREEFRFSQSLRGMIIRHPDMFYVSFKGDRDSVFLREAYKDSQLVEKNQLVLLKEKMRALVAVPRFPRRAAVGTGEEAEGMNGSLQSRDQVSDEEYDDEDEGLSDMEDLISELSGGKSDADYEWGDGWFGENDDSPPDFGDDEVKVAMKIADGSANGSAPVPVFPDGRPRERW.

The N-terminal 50 residues, 1-50 (MDAKLLLPFPFAPAAATRSPKSLFLGAPLPPPPRPPPFPLRLRPRPAAVV), are a transit peptide targeting the chloroplast. The PORR domain maps to 59–387 (KEAPFDTVIQ…LKEKMRALVA (329 aa)). Disordered stretches follow at residues 397 to 427 (VGTG…EDEG) and 446 to 498 (DYEW…RERW). 2 stretches are compositionally biased toward acidic residues: residues 417–427 (SDEEYDDEDEG) and 456–466 (ENDDSPPDFGD).

The protein localises to the plastid. It localises to the chloroplast. RNA-binding protein involved in the chloroplastic group II intron splicing. Binds specific group II introns and promotes their splicing. Functions in the context of a heterodimer with the ribonuclease III domain-containing protein RNC1. This Zea mays (Maize) protein is Protein WHAT'S THIS FACTOR 1, chloroplastic.